Consider the following 227-residue polypeptide: ATP-dependent dethiobiotin synthetase BioD (227 aa).

Position 13–18 (13–18) interacts with ATP; that stretch reads DAGKTT. Thr-17 contacts Mg(2+). Lys-38 is an active-site residue. ATP contacts are provided by residues Asp-55, 118–121, 178–179, 207–209, and Glu-214; these read EGAG, NR, and PYI. Residues Asp-55 and Glu-118 each contribute to the Mg(2+) site.

The protein belongs to the dethiobiotin synthetase family. In terms of assembly, homodimer. Mg(2+) serves as cofactor.

The protein localises to the cytoplasm. The catalysed reaction is (7R,8S)-7,8-diammoniononanoate + CO2 + ATP = (4R,5S)-dethiobiotin + ADP + phosphate + 3 H(+). The protein operates within cofactor biosynthesis; biotin biosynthesis; biotin from 7,8-diaminononanoate: step 1/2. In terms of biological role, catalyzes a mechanistically unusual reaction, the ATP-dependent insertion of CO2 between the N7 and N8 nitrogen atoms of 7,8-diaminopelargonic acid (DAPA, also called 7,8-diammoniononanoate) to form a ureido ring. This chain is ATP-dependent dethiobiotin synthetase BioD, found in Tolumonas auensis (strain DSM 9187 / NBRC 110442 / TA 4).